Here is a 117-residue protein sequence, read N- to C-terminus: Immunoglobulin kappa variable 1D-17 (117 aa).

The signal sequence occupies residues 1-22 (MDMRVPAQLLGLLLLWFPGARC). The tract at residues 23-45 (NIQMTQSPSAMSASVGDRVTITC) is framework-1. One can recognise an Ig-like domain in the interval 23 to 117 (NIQMTQSPSA…YYCLQHNSYP (95 aa)). Cysteine 45 and cysteine 110 form a disulfide bridge. Positions 46–56 (RARQGISNYLA) are complementarity-determining-1. The framework-2 stretch occupies residues 57-71 (WFQQKPGKVPKHLIY). The segment at 72–78 (AASSLQS) is complementarity-determining-2. Residues 79-110 (GVPSRFSGSGSGTEFTLTISSLQPEDFATYYC) are framework-3. The tract at residues 111-117 (LQHNSYP) is complementarity-determining-3.

In terms of assembly, immunoglobulins are composed of two identical heavy chains and two identical light chains; disulfide-linked.

The protein localises to the secreted. Its subcellular location is the cell membrane. Its function is as follows. V region of the variable domain of immunoglobulin light chains that participates in the antigen recognition. Immunoglobulins, also known as antibodies, are membrane-bound or secreted glycoproteins produced by B lymphocytes. In the recognition phase of humoral immunity, the membrane-bound immunoglobulins serve as receptors which, upon binding of a specific antigen, trigger the clonal expansion and differentiation of B lymphocytes into immunoglobulins-secreting plasma cells. Secreted immunoglobulins mediate the effector phase of humoral immunity, which results in the elimination of bound antigens. The antigen binding site is formed by the variable domain of one heavy chain, together with that of its associated light chain. Thus, each immunoglobulin has two antigen binding sites with remarkable affinity for a particular antigen. The variable domains are assembled by a process called V-(D)-J rearrangement and can then be subjected to somatic hypermutations which, after exposure to antigen and selection, allow affinity maturation for a particular antigen. The chain is Immunoglobulin kappa variable 1D-17 from Homo sapiens (Human).